A 393-amino-acid chain; its full sequence is NAD(P)H-quinone oxidoreductase subunit H, chloroplastic (393 aa).

Belongs to the complex I 49 kDa subunit family. NDH is composed of at least 16 different subunits, 5 of which are encoded in the nucleus.

Its subcellular location is the plastid. It is found in the chloroplast thylakoid membrane. It catalyses the reaction a plastoquinone + NADH + (n+1) H(+)(in) = a plastoquinol + NAD(+) + n H(+)(out). The catalysed reaction is a plastoquinone + NADPH + (n+1) H(+)(in) = a plastoquinol + NADP(+) + n H(+)(out). Its function is as follows. NDH shuttles electrons from NAD(P)H:plastoquinone, via FMN and iron-sulfur (Fe-S) centers, to quinones in the photosynthetic chain and possibly in a chloroplast respiratory chain. The immediate electron acceptor for the enzyme in this species is believed to be plastoquinone. Couples the redox reaction to proton translocation, and thus conserves the redox energy in a proton gradient. This is NAD(P)H-quinone oxidoreductase subunit H, chloroplastic from Morus indica (Mulberry).